We begin with the raw amino-acid sequence, 136 residues long: Large ribosomal subunit protein uL16 (136 aa).

This sequence belongs to the universal ribosomal protein uL16 family. As to quaternary structure, part of the 50S ribosomal subunit.

Its function is as follows. Binds 23S rRNA and is also seen to make contacts with the A and possibly P site tRNAs. The protein is Large ribosomal subunit protein uL16 of Actinobacillus pleuropneumoniae serotype 5b (strain L20).